The sequence spans 243 residues: Outer membrane protein A (243 aa).

5 consecutive transmembrane segments (beta stranded) span residues 1-8 (LTAKLGYP), 13-21 (LDIYTRLGG), 48-57 (PVFAGGVEWA), 62-69 (IATRLEYQ), and 88-96 (LLSLGVSYR). 4 repeat units span residues 107 to 108 (AP), 109 to 110 (AP), 111 to 112 (AP), and 113 to 114 (AP). Residues 107-114 (APAPAPAP) are 4 X 2 AA tandem repeats of A-P. Positions 116 to 243 (VQTKHFTLKS…RRVEIEVKGI (128 aa)) constitute an OmpA-like domain. A disulfide bridge connects residues Cys217 and Cys229.

The protein belongs to the outer membrane OOP (TC 1.B.6) superfamily. OmpA family. In terms of assembly, monomer and homodimer.

The protein resides in the cell outer membrane. In terms of biological role, with TolR probably plays a role in maintaining the position of the peptidoglycan cell wall in the periplasm. Acts as a porin with low permeability that allows slow penetration of small solutes; an internal gate slows down solute passage. Required for conjugation with F-type plasmids; probably serves as the mating receptor on recipient cells. The polypeptide is Outer membrane protein A (Escherichia fergusonii).